Consider the following 325-residue polypeptide: Lactonase drp35 (325 aa).

Ca(2+) is bound by residues glutamate 46, threonine 108, glycine 110, aspartate 128, threonine 131, tyrosine 133, aspartate 136, asparagine 183, aspartate 234, and serine 235. The active-site Proton donor is aspartate 234.

The protein belongs to the SMP-30/CGR1 family. The cofactor is Ca(2+).

It is found in the cytoplasm. Its function is as follows. Exhibits lactonase activity. Acts in cells with perturbed membrane integrity and is possibly related to the membrane homeostasis. In Staphylococcus epidermidis (strain ATCC 12228 / FDA PCI 1200), this protein is Lactonase drp35 (drp35).